The following is a 432-amino-acid chain: Phytase AppA (432 aa).

Positions 1–22 are cleaved as a signal peptide; sequence MKAILIPFLSLLIPLTPQSAFA. Arginine 38 is a 1D-myo-inositol hexakisphosphate binding site. Histidine 39 functions as the Nucleophile in the catalytic mechanism. Residues 42–46 and arginine 114 contribute to the 1D-myo-inositol hexakisphosphate site; that span reads RAPTK. 4 cysteine pairs are disulfide-bonded: cysteine 99/cysteine 130, cysteine 155/cysteine 430, cysteine 200/cysteine 210, and cysteine 404/cysteine 413. 1D-myo-inositol hexakisphosphate-binding positions include arginine 289 and 325-327; that span reads HDT. Residue aspartate 326 is the Proton donor of the active site.

It belongs to the histidine acid phosphatase family. Monomer.

The protein resides in the periplasm. It catalyses the reaction 1D-myo-inositol hexakisphosphate + H2O = 1D-myo-inositol 1,2,3,4,5-pentakisphosphate + phosphate. It carries out the reaction 1D-myo-inositol 1,2,3,4,5-pentakisphosphate + H2O = 1D-myo-inositol 2,3,4,5-tetrakisphosphate + phosphate. The enzyme catalyses 1D-myo-inositol 2,3,4,5-tetrakisphosphate + H2O = 1D-myo-inositol 2,4,5-triphosphate + phosphate. The catalysed reaction is 1D-myo-inositol 2,4,5-triphosphate + H2O = 1D-myo-inositol 2,5-bisphosphate + phosphate. It catalyses the reaction 1D-myo-inositol 2,5-bisphosphate + H2O = 1D-myo-inositol 2-phosphate + phosphate. It carries out the reaction GTP + H2O = GDP + phosphate + H(+). Its activity is regulated as follows. Contains three consecutive and one non-consecutive disulfide bonds and shows a strong dependence on DsbC for its full activity. Competitively inhibited by tartaric acid and by sodium fluorid. Its function is as follows. Catalyzes the hydrolysis of phytate (or myo-inositol hexakisphosphate, an indigestible organic form of phosphorus that is found in many plant tissues) to myo-inositol and inorganic phosphate. Dephosphorylates phytate in a stereospecific way by sequential removal of phosphate groups to produce myo-inositol 2-monophosphate. Also shows phosphoanhydride phosphatase activity and hydrolyzes the distal phosphoryl residues of GTP, the 5'-beta-phosphoryl residue of the regulatory nucleotide ppGpp and tripolyphosphates. Does not split most phosphomonoesters with the exception of the synthetic substrate p-nitrophenyl phosphate (pNPP), 2,3-bisphosphoglycerate and fructose 1,6-bisphosphate. This Escherichia coli (strain K12) protein is Phytase AppA.